A 371-amino-acid chain; its full sequence is Chaperone protein DnaJ (371 aa).

Positions 4-68 (DYYKILGVSK…QKRAAYDRFG (65 aa)) constitute a J domain. The CR-type zinc-finger motif lies at 134 to 212 (GIEKNISFSS…CHGMGRCHKQ (79 aa)). The Zn(2+) site is built by Cys-147, Cys-150, Cys-164, Cys-167, Cys-186, Cys-189, Cys-200, and Cys-203. CXXCXGXG motif repeat units lie at residues 147 to 154 (CDTCHGSG), 164 to 171 (CDACGGVG), 186 to 193 (CHKCKGNG), and 200 to 207 (CKKCHGMG).

This sequence belongs to the DnaJ family. Homodimer. Zn(2+) is required as a cofactor.

The protein localises to the cytoplasm. Functionally, participates actively in the response to hyperosmotic and heat shock by preventing the aggregation of stress-denatured proteins and by disaggregating proteins, also in an autonomous, DnaK-independent fashion. Unfolded proteins bind initially to DnaJ; upon interaction with the DnaJ-bound protein, DnaK hydrolyzes its bound ATP, resulting in the formation of a stable complex. GrpE releases ADP from DnaK; ATP binding to DnaK triggers the release of the substrate protein, thus completing the reaction cycle. Several rounds of ATP-dependent interactions between DnaJ, DnaK and GrpE are required for fully efficient folding. Also involved, together with DnaK and GrpE, in the DNA replication of plasmids through activation of initiation proteins. The chain is Chaperone protein DnaJ from Rickettsia akari (strain Hartford).